The primary structure comprises 904 residues: Thiamine diphosphate dependent-3-acetyloctanal synthase PigD (904 aa).

The segment at 879-904 is disordered; it reads RKAWAAQQPESTSTAFDQDPTQEATS. The segment covering 886–904 has biased composition (polar residues); that stretch reads QPESTSTAFDQDPTQEATS.

This sequence belongs to the TPP enzyme family. It depends on thiamine diphosphate as a cofactor.

It catalyses the reaction (2E)-octenal + pyruvate + H(+) = (S)-3-acetyloctanal + CO2. It functions in the pathway antibiotic biosynthesis; prodigiosin biosynthesis. Involved in the biosynthesis of 2-methyl-3-n-amyl-pyrrole (MAP), one of the terminal products involved in the biosynthesis of the red antibiotic prodigiosin (Pig). Catalyzes the decarboxylation of pyruvate, followed by the modification of the resulting two-carbon fragment acetaldehyde at the C3 position of the 2-octenal (1,2-addition of acetaldehyde) giving 3-acetyloctanal. In vitro, it can act on a number of alpha,beta-unsaturated carbonyl compounds, including aldehydes and ketones, and can catalyze both 1,2-addition and Stetter-type 1,4-addition depending on the substrate. The polypeptide is Thiamine diphosphate dependent-3-acetyloctanal synthase PigD (Serratia marcescens).